The primary structure comprises 30 residues: Cliotide T19 (30 aa).

A cross-link (cyclopeptide (Gly-Asn)) is located at residues 1–30 (GSVIKCGESCLLGKCYTPGCTCSRPICKKN). 3 disulfide bridges follow: C6/C20, C10/C22, and C15/C27.

In terms of processing, contains 3 disulfide bonds. Post-translationally, this is a cyclic peptide. As to expression, expressed in root nodules but not in seed.

Functionally, probably participates in a plant defense mechanism. Active against Gram-negative bacterium E.coli ATCC 700926 (MIC=0.6 uM) under low-salt conditions. Not active against Gram-positive bacterium S.aureus ATCC 12600 up to a concentration of 100 uM under low-salt conditions. Exhibits immunomodulatory activity but no cytotoxicity in vitro. The polypeptide is Cliotide T19 (Clitoria ternatea (Butterfly pea)).